Here is a 209-residue protein sequence, read N- to C-terminus: Glycine cleavage system H-like protein gcvH4 (209 aa).

Residues 35–51 (NNNNNNNNNNNNNNNNN) show a composition bias toward low complexity. A disordered region spans residues 35 to 56 (NNNNNNNNNNNNNNNNNRNKKL). One can recognise a Lipoyl-binding domain in the interval 73–159 (FATIGITNYV…KTTTTTTKIK (87 aa)).

Belongs to the GcvH family.

This chain is Glycine cleavage system H-like protein gcvH4 (gcvH4), found in Dictyostelium discoideum (Social amoeba).